The sequence spans 265 residues: uncharacterized protein (265 aa).

2 disordered regions span residues 62 to 94 and 118 to 149; these read RNKK…ALGK and MVPG…RPNP. The span at 126 to 139 shows a compositional bias: basic and acidic residues; the sequence is DGPKKSDTDIKDAV.

This is an uncharacterized protein from Homo sapiens (Human).